A 109-amino-acid polypeptide reads, in one-letter code: uncharacterized protein (109 aa).

This is an uncharacterized protein from Mycoplasma genitalium (strain ATCC 33530 / DSM 19775 / NCTC 10195 / G37) (Mycoplasmoides genitalium).